The primary structure comprises 258 residues: Undecaprenyl-diphosphatase (258 aa).

The next 8 helical transmembrane spans lie at 1-21, 42-62, 71-91, 96-116, 134-154, 173-193, 211-231, and 237-257; these read MSIIDAVILGIVEGLTEFLPV, LKCFEVVIQLGSILAVVFTFF, LWIKLIIGFLPTAAIGYLLYS, LFSQNVVVYMLIIWGVIFIVV, GISYKQAFFIGLSQCFAMVPG, QTAAAFSFLLAVPTMFAATFY, LFLLGGFVAFLVALFAIKMFL, and FDYIPFGIYRILIAFAFMFFV.

It belongs to the UppP family.

It localises to the cell inner membrane. It catalyses the reaction di-trans,octa-cis-undecaprenyl diphosphate + H2O = di-trans,octa-cis-undecaprenyl phosphate + phosphate + H(+). In terms of biological role, catalyzes the dephosphorylation of undecaprenyl diphosphate (UPP). Confers resistance to bacitracin. The chain is Undecaprenyl-diphosphatase from Campylobacter hominis (strain ATCC BAA-381 / DSM 21671 / CCUG 45161 / LMG 19568 / NCTC 13146 / CH001A).